A 42-amino-acid polypeptide reads, in one-letter code: Large ribosomal subunit protein bL36 (42 aa).

It belongs to the bacterial ribosomal protein bL36 family.

This chain is Large ribosomal subunit protein bL36, found in Anaplasma phagocytophilum (strain HZ).